We begin with the raw amino-acid sequence, 130 residues long: Small ribosomal subunit protein uS9 (130 aa).

Residues 106–130 (RDSRKVERKKPGLKKARKASQFSKR) form a disordered region. A compositionally biased stretch (basic residues) spans 111–130 (VERKKPGLKKARKASQFSKR).

Belongs to the universal ribosomal protein uS9 family.

The polypeptide is Small ribosomal subunit protein uS9 (Streptococcus pneumoniae serotype 2 (strain D39 / NCTC 7466)).